We begin with the raw amino-acid sequence, 721 residues long: Catalase-peroxidase (721 aa).

Residues 89–212 constitute a cross-link (tryptophyl-tyrosyl-methioninium (Trp-Tyr) (with M-238)); the sequence is WHSAGTYRTG…LAAVQMGLIY (124 aa). The active-site Proton acceptor is the histidine 90. Residues 212–238 constitute a cross-link (tryptophyl-tyrosyl-methioninium (Tyr-Met) (with W-89)); it reads YVNPEGPNGDPDPFAAAVDIRETFARM. A heme b-binding site is contributed by histidine 253.

This sequence belongs to the peroxidase family. Peroxidase/catalase subfamily. Homodimer or homotetramer. It depends on heme b as a cofactor. Formation of the three residue Trp-Tyr-Met cross-link is important for the catalase, but not the peroxidase activity of the enzyme.

The catalysed reaction is H2O2 + AH2 = A + 2 H2O. The enzyme catalyses 2 H2O2 = O2 + 2 H2O. Its function is as follows. Bifunctional enzyme with both catalase and broad-spectrum peroxidase activity. This Shewanella baltica (strain OS195) protein is Catalase-peroxidase.